The chain runs to 311 residues: Malate dehydrogenase (311 aa).

Residues 7–13 (GAAGGIG) and Asp34 each bind NAD(+). Positions 81 and 87 each coordinate substrate. Residues Asn94 and 117-119 (ITN) contribute to the NAD(+) site. Substrate-binding residues include Asn119 and Arg153. The Proton acceptor role is filled by His177. Met227 lines the NAD(+) pocket.

It belongs to the LDH/MDH superfamily. MDH type 1 family. Homodimer.

It carries out the reaction (S)-malate + NAD(+) = oxaloacetate + NADH + H(+). In terms of biological role, catalyzes the reversible oxidation of malate to oxaloacetate. In Vibrio cholerae serotype O1 (strain ATCC 39315 / El Tor Inaba N16961), this protein is Malate dehydrogenase (mdh).